Consider the following 513-residue polypeptide: Sphingolipid C9-methyltransferase (513 aa).

The next 2 helical transmembrane spans lie at 52 to 72 (ILFSILALVPGYITYKLGLGF) and 74 to 94 (TWVFFFLILAIPILMAYWSIM). S-adenosyl-L-methionine contacts are provided by residues 222–223 (YT), 259–267 (VLDIGCGWG), 285–290 (TLGRNQ), and 315–316 (YR).

This sequence belongs to the CFA/CMAS family.

The protein resides in the membrane. The catalysed reaction is a (4E,8E)-4-sphinga-4,8-dienine ceramide + S-adenosyl-L-methionine = a 9-methyl-(4E,8E)-sphinga-4,8-dienine ceramide + S-adenosyl-L-homocysteine + H(+). Its pathway is lipid metabolism; sphingolipid metabolism. Catalyzes methylation of the sphingoid base component of glucosylceramides (GluCers) at the C9-position. Sphingolipid C9-methylation requires 4,8-desaturated ceramides as substrates. Glucosylceramides play important roles in growth, differentiation and pathogenicity. The methyl group at the C9-position distinguishes fungal glucosylceramides from those of plants and animals, and may thus play a role in host-pathogen interactions enabling the host to recognize the fungal attack and initiate specific defense responses. Not necessary for vegetative growth at low temperatures, but plays a role in hyphal formation on solid medium. The chain is Sphingolipid C9-methyltransferase from Candida albicans (strain SC5314 / ATCC MYA-2876) (Yeast).